The primary structure comprises 415 residues: 3-isopropylmalate dehydratase large subunit (415 aa).

Residues cysteine 295, cysteine 353, and cysteine 356 each coordinate [4Fe-4S] cluster.

This sequence belongs to the aconitase/IPM isomerase family. LeuC type 2 subfamily. In terms of assembly, heterodimer of LeuC and LeuD. [4Fe-4S] cluster is required as a cofactor.

It carries out the reaction (2R,3S)-3-isopropylmalate = (2S)-2-isopropylmalate. It participates in amino-acid biosynthesis; L-leucine biosynthesis; L-leucine from 3-methyl-2-oxobutanoate: step 2/4. In terms of biological role, catalyzes the isomerization between 2-isopropylmalate and 3-isopropylmalate, via the formation of 2-isopropylmaleate. The sequence is that of 3-isopropylmalate dehydratase large subunit from Pyrobaculum arsenaticum (strain DSM 13514 / JCM 11321 / PZ6).